Here is a 439-residue protein sequence, read N- to C-terminus: Lipid-A-disaccharide synthase (439 aa).

The segment at 1–35 is disordered; that stretch reads MKEIGNRESGIVDGQRNGASVGSDPTALPIPHSPL.

The protein belongs to the LpxB family.

The enzyme catalyses a lipid X + a UDP-2-N,3-O-bis[(3R)-3-hydroxyacyl]-alpha-D-glucosamine = a lipid A disaccharide + UDP + H(+). It functions in the pathway bacterial outer membrane biogenesis; LPS lipid A biosynthesis. Functionally, condensation of UDP-2,3-diacylglucosamine and 2,3-diacylglucosamine-1-phosphate to form lipid A disaccharide, a precursor of lipid A, a phosphorylated glycolipid that anchors the lipopolysaccharide to the outer membrane of the cell. The sequence is that of Lipid-A-disaccharide synthase from Xanthomonas euvesicatoria pv. vesicatoria (strain 85-10) (Xanthomonas campestris pv. vesicatoria).